A 361-amino-acid polypeptide reads, in one-letter code: Probable dual-specificity RNA methyltransferase RlmN (361 aa).

Catalysis depends on Glu91, which acts as the Proton acceptor. Residues 97 to 329 enclose the Radical SAM core domain; it reads QHYGLSVCVT…KKKGVNCVVR (233 aa). Cys104 and Cys340 are joined by a disulfide. 3 residues coordinate [4Fe-4S] cluster: Cys111, Cys115, and Cys118. S-adenosyl-L-methionine contacts are provided by residues 163-164, Ser195, 218-220, and Asn296; these read GE and SLH. The active-site S-methylcysteine intermediate is the Cys340.

This sequence belongs to the radical SAM superfamily. RlmN family. It depends on [4Fe-4S] cluster as a cofactor.

The protein resides in the cytoplasm. It catalyses the reaction adenosine(2503) in 23S rRNA + 2 reduced [2Fe-2S]-[ferredoxin] + 2 S-adenosyl-L-methionine = 2-methyladenosine(2503) in 23S rRNA + 5'-deoxyadenosine + L-methionine + 2 oxidized [2Fe-2S]-[ferredoxin] + S-adenosyl-L-homocysteine. It carries out the reaction adenosine(37) in tRNA + 2 reduced [2Fe-2S]-[ferredoxin] + 2 S-adenosyl-L-methionine = 2-methyladenosine(37) in tRNA + 5'-deoxyadenosine + L-methionine + 2 oxidized [2Fe-2S]-[ferredoxin] + S-adenosyl-L-homocysteine. Specifically methylates position 2 of adenine 2503 in 23S rRNA and position 2 of adenine 37 in tRNAs. The chain is Probable dual-specificity RNA methyltransferase RlmN from Streptococcus pneumoniae serotype 4 (strain ATCC BAA-334 / TIGR4).